A 103-amino-acid polypeptide reads, in one-letter code: Flagellar hook-basal body complex protein FliE (103 aa).

The protein belongs to the FliE family.

It is found in the bacterial flagellum basal body. The polypeptide is Flagellar hook-basal body complex protein FliE (Photorhabdus laumondii subsp. laumondii (strain DSM 15139 / CIP 105565 / TT01) (Photorhabdus luminescens subsp. laumondii)).